The sequence spans 342 residues: uncharacterized protein (342 aa).

It belongs to the cycloisomerase 2 family.

This is an uncharacterized protein from Staphylococcus aureus (strain NCTC 8325 / PS 47).